Here is a 380-residue protein sequence, read N- to C-terminus: Tubulin alpha chain (380 aa).

GTP contacts are provided by glutamate 46, serine 115, glycine 119, threonine 120, threonine 154, asparagine 181, and asparagine 202. Glutamate 46 serves as a coordination point for Mg(2+). Glutamate 228 is a catalytic residue.

Belongs to the tubulin family. Dimer of alpha and beta chains. A typical microtubule is a hollow water-filled tube with an outer diameter of 25 nm and an inner diameter of 15 nM. Alpha-beta heterodimers associate head-to-tail to form protofilaments running lengthwise along the microtubule wall with the beta-tubulin subunit facing the microtubule plus end conferring a structural polarity. Microtubules usually have 13 protofilaments but different protofilament numbers can be found in some organisms and specialized cells. Requires Mg(2+) as cofactor.

It localises to the cytoplasm. It is found in the cytoskeleton. The enzyme catalyses GTP + H2O = GDP + phosphate + H(+). Functionally, tubulin is the major constituent of microtubules, a cylinder consisting of laterally associated linear protofilaments composed of alpha- and beta-tubulin heterodimers. Microtubules grow by the addition of GTP-tubulin dimers to the microtubule end, where a stabilizing cap forms. Below the cap, tubulin dimers are in GDP-bound state, owing to GTPase activity of alpha-tubulin. This is Tubulin alpha chain (TUB1) from Encephalitozoon hellem (Microsporidian parasite).